Reading from the N-terminus, the 247-residue chain is Phosphate import ATP-binding protein PstB (247 aa).

An ABC transporter domain is found at Cys2–Ile242. Residue Gly32–Ser39 coordinates ATP.

The protein belongs to the ABC transporter superfamily. Phosphate importer (TC 3.A.1.7) family. As to quaternary structure, the complex is composed of two ATP-binding proteins (PstB), two transmembrane proteins (PstC and PstA) and a solute-binding protein (PstS).

The protein resides in the cell inner membrane. It catalyses the reaction phosphate(out) + ATP + H2O = ADP + 2 phosphate(in) + H(+). In terms of biological role, part of the ABC transporter complex PstSACB involved in phosphate import. Responsible for energy coupling to the transport system. The polypeptide is Phosphate import ATP-binding protein PstB (Methylococcus capsulatus (strain ATCC 33009 / NCIMB 11132 / Bath)).